Reading from the N-terminus, the 113-residue chain is Iron-sulfur cluster insertion protein ErpA (113 aa).

Residues cysteine 41, cysteine 105, and cysteine 107 each coordinate iron-sulfur cluster.

It belongs to the HesB/IscA family. In terms of assembly, homodimer. Iron-sulfur cluster serves as cofactor.

In terms of biological role, required for insertion of 4Fe-4S clusters for at least IspG. The chain is Iron-sulfur cluster insertion protein ErpA from Vibrio parahaemolyticus serotype O3:K6 (strain RIMD 2210633).